The chain runs to 180 residues: Large ribosomal subunit protein uL5 (180 aa).

The protein belongs to the universal ribosomal protein uL5 family. Part of the 50S ribosomal subunit; part of the 5S rRNA/L5/L18/L25 subcomplex. Contacts the 5S rRNA and the P site tRNA. Forms a bridge to the 30S subunit in the 70S ribosome.

Its function is as follows. This is one of the proteins that bind and probably mediate the attachment of the 5S RNA into the large ribosomal subunit, where it forms part of the central protuberance. In the 70S ribosome it contacts protein S13 of the 30S subunit (bridge B1b), connecting the 2 subunits; this bridge is implicated in subunit movement. Contacts the P site tRNA; the 5S rRNA and some of its associated proteins might help stabilize positioning of ribosome-bound tRNAs. In Anaeromyxobacter sp. (strain Fw109-5), this protein is Large ribosomal subunit protein uL5.